The primary structure comprises 378 residues: Cytochrome b (378 aa).

Helical transmembrane passes span 33–53 (SGSL…FLSM), 77–98 (WLIR…YFHI), 113–133 (XNVG…GYVL), and 178–198 (FFAF…IHLI). The heme b site is built by histidine 83 and histidine 97. Histidine 196 lines the heme b pocket. Histidine 201 contacts a ubiquinone. 4 helical membrane passes run 226–246 (FKDL…ALFS), 288–308 (LGGV…PILH), 320–340 (LTQF…WIGG), and 347–367 (FIII…VLFP).

It belongs to the cytochrome b family. In terms of assembly, the cytochrome bc1 complex contains 3 respiratory subunits (MT-CYB, CYC1 and UQCRFS1), 2 core proteins (UQCRC1 and UQCRC2) and probably 6 low-molecular weight proteins. It depends on heme b as a cofactor.

It localises to the mitochondrion inner membrane. In terms of biological role, component of the ubiquinol-cytochrome c reductase complex (complex III or cytochrome b-c1 complex) that is part of the mitochondrial respiratory chain. The b-c1 complex mediates electron transfer from ubiquinol to cytochrome c. Contributes to the generation of a proton gradient across the mitochondrial membrane that is then used for ATP synthesis. The chain is Cytochrome b (mt-cyb) from Nannacara anomala (Goldeneye cichlid).